Here is a 443-residue protein sequence, read N- to C-terminus: Histidine--tRNA ligase (443 aa).

The span at 1-20 (MTESEKKQQKPQKAKAEKFK) shows a compositional bias: basic and acidic residues. The interval 1-21 (MTESEKKQQKPQKAKAEKFKA) is disordered.

This sequence belongs to the class-II aminoacyl-tRNA synthetase family. As to quaternary structure, homodimer.

The protein localises to the cytoplasm. It catalyses the reaction tRNA(His) + L-histidine + ATP = L-histidyl-tRNA(His) + AMP + diphosphate + H(+). This Corynebacterium jeikeium (strain K411) protein is Histidine--tRNA ligase.